A 1138-amino-acid chain; its full sequence is uncharacterized protein (1138 aa).

Positions 1-28 (MKLFPRSILIILVLSFALNLGLVTKTHA) are cleaved as a signal peptide. A run of 7 helical transmembrane segments spans residues 331-351 (IVTA…LLAG), 359-379 (YINF…INIT), 392-412 (MIQW…SWVM), 494-514 (MLVS…AFMV), 520-540 (CMIS…MFLF), 554-574 (MISF…MFSV), and 699-719 (IKNI…MYNF). Positions 775–784 (DLKAGQGGGV) are enriched in gly residues. 3 disordered regions span residues 775-914 (DLKA…KGTG), 958-977 (GGGR…RTNA), and 995-1071 (ERDN…KQIR). Residues 801 to 830 (AASGGTSAPTVTTPTASSSVATSSPKTVSS) are compositionally biased toward low complexity. Residues 838 to 852 (TPPPAPSEAVSPPPA) show a composition bias toward pro residues. Over residues 854-869 (IRTSISTPAPQSNIET) the composition is skewed to polar residues. 4 stretches are compositionally biased toward basic and acidic residues: residues 875–888 (IIRD…KEID), 961–977 (RIRD…RTNA), 995–1032 (ERDN…RKEN), and 1058–1071 (LKEH…KQIR).

Belongs to the TrbL/VirB6 family.

It is found in the cell membrane. This is an uncharacterized protein from Rickettsia felis (strain ATCC VR-1525 / URRWXCal2) (Rickettsia azadi).